A 407-amino-acid chain; its full sequence is 4-hydroxybenzoate polyprenyltransferase, mitochondrial (407 aa).

The transit peptide at 1-20 (MAFFGLSRVSRRLLKSSVSV) directs the protein to the mitochondrion. 6 helical membrane passes run 137 to 157 (IGTWLLAWPCMWSIALAADPG), 162 to 182 (FKYMALFGCGALLLRGAGCTI), 210 to 230 (FQGIGFLGLQLLLGLGILLQL), 254 to 274 (FTFWPQAFLGLTINWGALLGW), 279 to 299 (GSIAPSIVLPLYLSGVCWTLV), and 330 to 350 (LWLTGFGTASIGFLALSGFSA).

Belongs to the UbiA prenyltransferase family. It depends on Mg(2+) as a cofactor. Expressed in flowers.

The protein localises to the mitochondrion inner membrane. The catalysed reaction is an all-trans-polyprenyl diphosphate + 4-hydroxybenzoate = a 4-hydroxy-3-(all-trans-polyprenyl)benzoate + diphosphate. It functions in the pathway cofactor biosynthesis; ubiquinone biosynthesis. In terms of biological role, catalyzes the prenylation of para-hydroxybenzoate (PHB) with an all-trans polyprenyl group. Mediates the second step in the final reaction sequence of coenzyme Q (CoQ) biosynthesis, which is the condensation of the polyisoprenoid side chain with PHB, generating the first membrane-bound Q intermediate. Required for embryo development. This is 4-hydroxybenzoate polyprenyltransferase, mitochondrial from Arabidopsis thaliana (Mouse-ear cress).